A 115-amino-acid polypeptide reads, in one-letter code: U3-lycotoxin-Ls1a (115 aa).

The N-terminal stretch at Met1–Ala20 is a signal peptide. A propeptide spanning residues Glu21–Arg44 is cleaved from the precursor. 4 disulfide bridges follow: Cys48–Cys63, Cys55–Cys72, Cys62–Cys87, and Cys74–Cys85.

It belongs to the neurotoxin 19 (CSTX) family. 01 subfamily. Expressed by the venom gland.

It is found in the secreted. The sequence is that of U3-lycotoxin-Ls1a from Lycosa singoriensis (Wolf spider).